The following is a 131-amino-acid chain: MSRRLGAAAAVLLLWLAVLTFAFHGYYGGRLGSARRRNILLQHPALALHLPTRKMLLAVASFDDASSPSSLTTTDRHHHHHRHHGHHHHRGHDRWNRKGVPPTAAGPGEEVDPRFGVQKRLVPTGPNPLHH.

The first 22 residues, 1 to 22, serve as a signal peptide directing secretion; the sequence is MSRRLGAAAAVLLLWLAVLTFA. Residues 67–131 form a disordered region; sequence SPSSLTTTDR…VPTGPNPLHH (65 aa). Positions 76–97 are enriched in basic residues; it reads RHHHHHRHHGHHHHRGHDRWNR.

It belongs to the CLV3/ESR signal peptide family. Expressed in all aerial apical meristems, including the floral and inflorescence meristems in the reproductive phase and the shoot apical meristem in the vegetative phase. Also detected in the primordia of lateral organs such as the leaf and the floral organs.

It is found in the secreted. Functionally, involved in the maintenance of the floral meristem and of the shoot apical meristem in the vegetative phase. Suppresses the fon2 mutation and acts independently of FON1. In Oryza sativa subsp. japonica, the protein has a single amino acid substitution at the putative processing site of the signal peptide and is inactive. This chain is Protein FON2 SPARE1 (FOS1), found in Oryza sativa subsp. indica (Rice).